Reading from the N-terminus, the 315-residue chain is Serine/threonine-protein phosphatase PP2A catalytic subunit 2 (315 aa).

The Mn(2+) site is built by D62, H64, D90, and N122. The active-site Proton donor is H123. The Mn(2+) site is built by H172 and H247. A disordered region spans residues 294-315 (QFEPAPRENEPHTTRRVPDYFL). The segment covering 298 to 315 (APRENEPHTTRRVPDYFL) has biased composition (basic and acidic residues). L315 is modified (leucine methyl ester).

The protein belongs to the PPP phosphatase family. PP-2A subfamily. Mn(2+) serves as cofactor. Post-translationally, reversibly methyl esterified on Leu-315 by leucine carboxyl methyltransferase 1 (PPM1) and protein phosphatase methylesterase 1 (PPE1). Carboxyl methylation influences the affinity of the catalytic subunit for the different regulatory subunits, thereby modulating the PP2A holoenzyme's substrate specificity, enzyme activity and cellular localization.

The catalysed reaction is O-phospho-L-seryl-[protein] + H2O = L-seryl-[protein] + phosphate. The enzyme catalyses O-phospho-L-threonyl-[protein] + H2O = L-threonyl-[protein] + phosphate. This chain is Serine/threonine-protein phosphatase PP2A catalytic subunit 2 (Ppn2), found in Paramecium tetraurelia.